The primary structure comprises 475 residues: Tryptophan biosynthesis protein TrpCF (475 aa).

Residues 1-279 (MQETGGYKTE…AAVRRVLLGE (279 aa)) form an indole-3-glycerol phosphate synthase region. Residues 280 to 475 (NKVCGLTRAQ…AAVFQALRVY (196 aa)) form an N-(5'-phosphoribosyl)anthranilate isomerase region.

In the N-terminal section; belongs to the TrpC family. The protein in the C-terminal section; belongs to the TrpF family. Monomer.

It catalyses the reaction N-(5-phospho-beta-D-ribosyl)anthranilate = 1-(2-carboxyphenylamino)-1-deoxy-D-ribulose 5-phosphate. The catalysed reaction is 1-(2-carboxyphenylamino)-1-deoxy-D-ribulose 5-phosphate + H(+) = (1S,2R)-1-C-(indol-3-yl)glycerol 3-phosphate + CO2 + H2O. It functions in the pathway amino-acid biosynthesis; L-tryptophan biosynthesis; L-tryptophan from chorismate: step 3/5. The protein operates within amino-acid biosynthesis; L-tryptophan biosynthesis; L-tryptophan from chorismate: step 4/5. Functionally, bifunctional enzyme that catalyzes two sequential steps of tryptophan biosynthetic pathway. The first reaction is catalyzed by the isomerase, coded by the TrpF domain; the second reaction is catalyzed by the synthase, coded by the TrpC domain. This Yersinia pestis protein is Tryptophan biosynthesis protein TrpCF (trpC).